We begin with the raw amino-acid sequence, 1131 residues long: Phytochrome a (1131 aa).

The segment covering 1–23 has biased composition (low complexity); sequence MSSSRPAHSSSSSSRTRQSSQAR. The tract at residues 1 to 26 is disordered; sequence MSSSRPAHSSSSSSRTRQSSQARILA. The region spanning 219–404 is the GAF domain; it reads SMEALCNTVV…VFAVHVNKEF (186 aa). A phytochromobilin-binding site is contributed by Cys324. PAS domains lie at 620–690 and 750–834; these read VTSE…LQGK and VEGD…LAGE. A Histidine kinase domain is found at 904-1124; the sequence is YMRHAINKPL…TFILTAELAA (221 aa).

The protein belongs to the phytochrome family. As to quaternary structure, homodimer. In terms of processing, contains one covalently linked phytochromobilin chromophore.

In terms of biological role, regulatory photoreceptor which exists in two forms that are reversibly interconvertible by light: the Pr form that absorbs maximally in the red region of the spectrum and the Pfr form that absorbs maximally in the far-red region. Photoconversion of Pr to Pfr induces an array of morphogenic responses, whereas reconversion of Pfr to Pr cancels the induction of those responses. Pfr controls the expression of a number of nuclear genes including those encoding the small subunit of ribulose-bisphosphate carboxylase, chlorophyll A/B binding protein, protochlorophyllide reductase, rRNA, etc. It also controls the expression of its own gene(s) in a negative feedback fashion. This is Phytochrome a (PHYA) from Sorghum bicolor (Sorghum).